The primary structure comprises 116 residues: MKGPSVLAVTAVVLLLVLSALENSSGAPQRLSEKRNWTPQAMLYLKGAQGRRFLSDQSRRKELADRPPPERRNPDLELLTLPEAAALFLASLEKSQKDEGGNFDKSELLEDRLFNW.

A signal peptide spans 1–26 (MKGPSVLAVTAVVLLLVLSALENSSG). The propeptide occupies 27–35 (APQRLSEKR). Glutamine amide is present on glutamine 49. Propeptides lie at residues 50 to 116 (GRRF…LFNW) and 74 to 116 (PDLE…LFNW). The tract at residues 52–77 (RFLSDQSRRKELADRPPPERRNPDLE) is disordered. A compositionally biased stretch (basic and acidic residues) spans 53 to 75 (FLSDQSRRKELADRPPPERRNPD).

The protein belongs to the spexin family.

It localises to the secreted. The protein resides in the extracellular space. The protein localises to the cytoplasmic vesicle. Its subcellular location is the secretory vesicle. Functionally, plays a role as a central modulator of cardiovascular and renal function and nociception. Also plays a role in energy metabolism and storage. Inhibits adrenocortical cell proliferation with minor stimulation on corticosteroid release. Its function is as follows. Acts as a ligand for galanin receptors GALR2 and GALR3. Intracerebroventricular administration of the peptide induces an increase in arterial blood pressure, a decrease in both heart rate and renal excretion and delayed natriuresis. Intraventricular administration of the peptide induces antinociceptive activity. Also induces contraction of muscarinic-like stomach smooth muscles. Intraperitoneal administration of the peptide induces a reduction in food consumption and body weight. Inhibits long chain fatty acid uptake into adipocytes. Intracerebroventricular administration of the peptide induces a decrease in heart rate, but no change in arterial pressure, and an increase in urine flow rate. Intraventricular administration of the peptide induces antinociceptive activity. This Mus musculus (Mouse) protein is Spexin (Spx).